Reading from the N-terminus, the 397-residue chain is Elongation factor Tu (397 aa).

The region spanning 10–207 is the tr-type G domain; sequence KPHVNIGTIG…VLDEYVKEPV (198 aa). Positions 19–26 are G1; it reads GHIDHGKT. 19-26 contacts GTP; the sequence is GHIDHGKT. Thr26 provides a ligand contact to Mg(2+). Positions 60–64 are G2; it reads GITIS. Residues 81–84 form a G3 region; it reads DCPG. GTP is bound by residues 81–85 and 136–139; these read DCPGH and NKCD. Residues 136–139 are G4; sequence NKCD. The tract at residues 174-176 is G5; sequence SAL.

The protein belongs to the TRAFAC class translation factor GTPase superfamily. Classic translation factor GTPase family. EF-Tu/EF-1A subfamily. In terms of assembly, monomer.

The protein localises to the cytoplasm. It catalyses the reaction GTP + H2O = GDP + phosphate + H(+). Its function is as follows. GTP hydrolase that promotes the GTP-dependent binding of aminoacyl-tRNA to the A-site of ribosomes during protein biosynthesis. The sequence is that of Elongation factor Tu from Desulforapulum autotrophicum (strain ATCC 43914 / DSM 3382 / VKM B-1955 / HRM2) (Desulfobacterium autotrophicum).